Consider the following 571-residue polypeptide: Proline--tRNA ligase (571 aa).

Belongs to the class-II aminoacyl-tRNA synthetase family. ProS type 1 subfamily. In terms of assembly, homodimer.

The protein resides in the cytoplasm. The enzyme catalyses tRNA(Pro) + L-proline + ATP = L-prolyl-tRNA(Pro) + AMP + diphosphate. Functionally, catalyzes the attachment of proline to tRNA(Pro) in a two-step reaction: proline is first activated by ATP to form Pro-AMP and then transferred to the acceptor end of tRNA(Pro). As ProRS can inadvertently accommodate and process non-cognate amino acids such as alanine and cysteine, to avoid such errors it has two additional distinct editing activities against alanine. One activity is designated as 'pretransfer' editing and involves the tRNA(Pro)-independent hydrolysis of activated Ala-AMP. The other activity is designated 'posttransfer' editing and involves deacylation of mischarged Ala-tRNA(Pro). The misacylated Cys-tRNA(Pro) is not edited by ProRS. This is Proline--tRNA ligase from Psychromonas ingrahamii (strain DSM 17664 / CCUG 51855 / 37).